Reading from the N-terminus, the 191-residue chain is Ribosomal RNA large subunit methyltransferase E (191 aa).

The S-adenosyl-L-methionine site is built by Gly49, Trp51, Asp66, Asp82, and Asp105. Lys145 functions as the Proton acceptor in the catalytic mechanism.

The protein belongs to the class I-like SAM-binding methyltransferase superfamily. RNA methyltransferase RlmE family.

The protein localises to the cytoplasm. It catalyses the reaction uridine(2552) in 23S rRNA + S-adenosyl-L-methionine = 2'-O-methyluridine(2552) in 23S rRNA + S-adenosyl-L-homocysteine + H(+). Functionally, specifically methylates the uridine in position 2552 of 23S rRNA at the 2'-O position of the ribose in the fully assembled 50S ribosomal subunit. In Archaeoglobus fulgidus (strain ATCC 49558 / DSM 4304 / JCM 9628 / NBRC 100126 / VC-16), this protein is Ribosomal RNA large subunit methyltransferase E.